Here is a 122-residue protein sequence, read N- to C-terminus: Transcription initiation factor IIA subunit 2 (122 aa).

Phosphoserine occurs at positions 95 and 102.

This sequence belongs to the TFIIA subunit 2 family. In terms of assembly, TFIIA is a heterodimer composed of the large TOA1 and a small TOA2 subunits. Interacts with TBP. Interacts with TAF11. Interacts with KAP122.

The protein resides in the cytoplasm. The protein localises to the nucleus. TFIIA is a component of the transcription machinery of RNA polymerase II and plays an important role in transcriptional activation. TFIIA in a complex with TBP mediates transcriptional activity. The protein is Transcription initiation factor IIA subunit 2 (TOA2) of Saccharomyces cerevisiae (strain ATCC 204508 / S288c) (Baker's yeast).